A 741-amino-acid chain; its full sequence is HSP-interacting protein (741 aa).

TPR repeat units follow at residues 26–59 (SREL…LPAG), 65–100 (AHLR…VPRY), and 102–134 (RALL…EPGN). The disordered stretch occupies residues 168–270 (ASAKGEERKK…GESKQQKHSA (103 aa)). Positions 171–184 (KGEERKKSRNKRFD) are enriched in basic and acidic residues. Polar residues predominate over residues 201–218 (SASTEKQAGPRQTNGTGN). Basic and acidic residues predominate over residues 219–247 (HQDHTEDSESNGLEKLEQSTETGEKDMGK). The span at 248-258 (KRGAHAAGKKP) shows a compositional bias: basic residues. The PB1 domain occupies 285-364 (MKDVKLVFGE…VPIRFYVVEV (80 aa)). TPR repeat units follow at residues 496–530 (EFIL…KSDF), 532–557 (EGLI…ACKI), 558–591 (NMET…RLKG), and 628–663 (SHIN…AMEK).

In terms of assembly, interacts (via C-terminus) with O1. Interacts (via C-terminus) with OP10 (via N-terminus).

In terms of biological role, acts as a co-chaperone for HSP90 and is required for proper folding of the myosin motor domain. The chain is HSP-interacting protein from Zea mays (Maize).